The following is an 87-amino-acid chain: HssA/B-like protein 18 (87 aa).

It belongs to the hssA/B family.

This Dictyostelium discoideum (Social amoeba) protein is HssA/B-like protein 18 (hssl18).